The chain runs to 296 residues: Uridine phosphorylase A (296 aa).

Phosphate-binding positions include G46, R77, and 121 to 124; that span reads RLGT. Residues 125 to 126 and 201 to 203 each bind uridine; these read SG and QGR.

The protein belongs to the PNP/UDP phosphorylase family. Homodimer.

The enzyme catalyses uridine + phosphate = alpha-D-ribose 1-phosphate + uracil. The protein operates within pyrimidine metabolism; UMP biosynthesis via salvage pathway; uracil from uridine (phosphorylase route): step 1/1. Functionally, catalyzes the reversible phosphorylytic cleavage of uridine and deoxyuridine to uracil and ribose- or deoxyribose-1-phosphate. The produced molecules are then utilized as carbon and energy sources or in the rescue of pyrimidine bases for nucleotide synthesis. The protein is Uridine phosphorylase A of Schistosoma mansoni (Blood fluke).